A 68-amino-acid chain; its full sequence is Cold shock-like protein CspA (68 aa).

Residues 4–64 (GTVKWFNDAK…GPKGLQAQNV (61 aa)) form the CSD domain.

It is found in the cytoplasm. This Stigmatella aurantiaca (strain DW4/3-1) protein is Cold shock-like protein CspA (cspA).